The sequence spans 597 residues: Aspartate--tRNA ligase (597 aa).

Position 180 (Glu-180) interacts with L-aspartate. The interval 204-207 (QLFK) is aspartate. Arg-226 serves as a coordination point for L-aspartate. Residues 226-228 (RDE) and Gln-235 contribute to the ATP site. An L-aspartate-binding site is contributed by His-454. Position 488 (Glu-488) interacts with ATP. Residue Arg-495 participates in L-aspartate binding. 540–543 (GLDR) provides a ligand contact to ATP.

This sequence belongs to the class-II aminoacyl-tRNA synthetase family. Type 1 subfamily. Homodimer.

The protein resides in the cytoplasm. It catalyses the reaction tRNA(Asp) + L-aspartate + ATP = L-aspartyl-tRNA(Asp) + AMP + diphosphate. In terms of biological role, catalyzes the attachment of L-aspartate to tRNA(Asp) in a two-step reaction: L-aspartate is first activated by ATP to form Asp-AMP and then transferred to the acceptor end of tRNA(Asp). This Clostridium perfringens (strain SM101 / Type A) protein is Aspartate--tRNA ligase.